The sequence spans 200 residues: DNA-binding protein HupB (200 aa).

Positions 1 to 90 are bacterial histone-like domain; that stretch reads MNKAELIDVL…PGAQFKAVVA (90 aa). N6-acetyllysine occurs at positions 3, 72, 86, 103, 137, 144, and 156. Positions 101 to 200 are degenerate repeats region; it reads AVKRGVATSA…KVTAAKRGRK (100 aa). The segment at 179 to 200 is disordered; that stretch reads AKKAAVKKAPAKKVTAAKRGRK.

This sequence belongs to the bacterial histone-like protein family. Long actinobacterial subfamily. Binds to human laminin-2. In terms of processing, may also be methylated and possibly phosphorylated in vivo.

The protein resides in the cytoplasm. It localises to the nucleoid. Its subcellular location is the secreted. It is found in the cell wall. The protein localises to the cell surface. It catalyses the reaction 4 Fe(2+) + O2 + 4 H(+) = 4 Fe(3+) + 2 H2O. In terms of biological role, a nucleoid-associated protein (NAP) that plays a role in local chromosome architecture and chromosome compactation. Required for biofilm formation, stress survival and possibly in cell wall assembly, probably influences transcription. RNase E and HupB jointly contribute to cellular adaptation to changing growth conditions and survival during antibiotic treatment and in the host. Functionally, binds Fe(3+) but not Fe(2+). Has ferroxidase activity, converts Fe(2+) into Fe(3+) and in the presence of H(2)O(2) prevents the generation of hydroxyl radicals (the Fenton reaction). Protects DNA from damage in the presence of FeSO(4) and H(2)O(2). May function in iron storage. Its function is as follows. May be involved in entry into human Schwann cells. In Mycobacterium leprae (strain TN), this protein is DNA-binding protein HupB.